The primary structure comprises 74 residues: Serine rich endogenous peptide 23 (74 aa).

Residues 1 to 25 (MNKVVVYVLALSILLFFGLPNTTLA) form the signal peptide. Positions 52-66 (KIAVGGSDSVRAHSK) match the SCOOP motif motif. The SxS motif essential for MIK2 binding motif lies at 58–60 (SDS).

Belongs to the serine rich endogenous peptide (SCOOP) phytocytokine family. As to quaternary structure, interacts with MIK2 (via extracellular leucine-rich repeat domain); this interaction triggers the formation of complex between MIK2 and the BAK1/SERK3 and SERK4 coreceptors, and subsequent BAK1 activation by phosphorylation. As to expression, mostly expressed in roots, and, to a lower extent, in seedlings shoots.

The protein localises to the cell membrane. The protein resides in the secreted. It localises to the extracellular space. Its subcellular location is the apoplast. Its function is as follows. Brassicaceae-specific phytocytokine (plant endogenous peptide released into the apoplast) perceived by MIK2 in a BAK1/SERK3 and SERK4 coreceptors-dependent manner, that modulates various physiological and antimicrobial processes including growth prevention and reactive oxygen species (ROS) response regulation. Inhibits root growth. The polypeptide is Serine rich endogenous peptide 23 (Arabidopsis thaliana (Mouse-ear cress)).